The following is a 171-amino-acid chain: Lipoprotein signal peptidase (171 aa).

3 consecutive transmembrane segments (helical) span residues 8–28, 64–84, and 99–119; these read SFLWLSAVAFVIDLLTKYIVV, WQQYFFILLALAISGMLVYFL, and ALIIGGALANMVDRAYNGFVV. Active-site residues include Asp120 and Asp138. The helical transmembrane segment at 133–153 threads the bilayer; the sequence is VFNIADIAICIGAGLLVLDAF.

It belongs to the peptidase A8 family.

It localises to the cell inner membrane. It carries out the reaction Release of signal peptides from bacterial membrane prolipoproteins. Hydrolyzes -Xaa-Yaa-Zaa-|-(S,diacylglyceryl)Cys-, in which Xaa is hydrophobic (preferably Leu), and Yaa (Ala or Ser) and Zaa (Gly or Ala) have small, neutral side chains.. It participates in protein modification; lipoprotein biosynthesis (signal peptide cleavage). Its function is as follows. This protein specifically catalyzes the removal of signal peptides from prolipoproteins. This is Lipoprotein signal peptidase from Haemophilus influenzae (strain ATCC 51907 / DSM 11121 / KW20 / Rd).